A 496-amino-acid chain; its full sequence is MLIFERSRPGRGATAQAPLREATVSGLPERFRRGTRAPLPELSELDVVRHYTRLSQKNFSIDTQFYPLGSCTMKYNPRACNSLAMLPGFLGRHPHAPDTHSQGFLACMFELQEMLRDVTGMKGGVSLTPMAGAQGEFAGVAMIRAYHDARKDTARTEILVPDAAHGTNPATATMCGYTVKEIPTDDSGDVDMEALKAALGPHTAGIMLTNPSTLGVFERRIKEIADLVHQAGGLLYYDGANLNAILGKVRPGDMGFDVIHMNLHKTFSTPHGGGGPGAGAVGVSERLRPFMPIPVVAKEGERYRFMTEKDLPQSIGRLSAFAGNAGVLLRAYVYMRMLGRAGMPRVAEFSTLNANYVMARLREKGFELAFPGRRATHEFIVTLKRLAKDTEVTAMDVAKRLLDFNYHAPTTYFPLLVPECLLIEPTETESKETLDGFVEAMAEILEEARTSPDKVKGAPYTQPNRRFDEVRAARELDVAWRPGAALDEVAEQGRTD.

Residue lysine 265 is modified to N6-(pyridoxal phosphate)lysine.

This sequence belongs to the GcvP family. C-terminal subunit subfamily. In terms of assembly, the glycine cleavage system is composed of four proteins: P, T, L and H. In this organism, the P 'protein' is a heterodimer of two subunits. Pyridoxal 5'-phosphate is required as a cofactor.

The catalysed reaction is N(6)-[(R)-lipoyl]-L-lysyl-[glycine-cleavage complex H protein] + glycine + H(+) = N(6)-[(R)-S(8)-aminomethyldihydrolipoyl]-L-lysyl-[glycine-cleavage complex H protein] + CO2. In terms of biological role, the glycine cleavage system catalyzes the degradation of glycine. The P protein binds the alpha-amino group of glycine through its pyridoxal phosphate cofactor; CO(2) is released and the remaining methylamine moiety is then transferred to the lipoamide cofactor of the H protein. In Thioalkalivibrio sulfidiphilus (strain HL-EbGR7), this protein is Probable glycine dehydrogenase (decarboxylating) subunit 2.